The sequence spans 242 residues: MTHSPLIQFNIKKLIDIKMFGFDVSFTNSSIYMLLATTLSLTYLYLAFYNRKLIPSRLQVSAEIVYNLVADMLNQNIGIKGRKFIPLVFSLFIFILFCNLLGMTPYSFTATSHIIVTFTLALLIFLTVTIVGFIKHGVSFLTLFLPHGTPVWLAPLMIVIELFTYLARPVSLSLRLAANMMAGHVLLKVIASFTVSLMIYLKFLPIPLMVILIGFEIFIAILQAYIFTILSCMYLNDAINLH.

6 helical membrane passes run 29 to 49, 84 to 104, 114 to 134, 140 to 160, 189 to 209, and 210 to 230; these read SSIY…LAFY, FIPL…LGMT, IIVT…VGFI, FLTL…MIVI, VIAS…IPLM, and VILI…FTIL.

This sequence belongs to the ATPase A chain family. In terms of assembly, F-type ATPases have 2 components, CF(1) - the catalytic core - and CF(0) - the membrane proton channel. CF(1) has five subunits: alpha(3), beta(3), gamma(1), delta(1), epsilon(1). CF(0) has three main subunits: a(1), b(2) and c(9-12). The alpha and beta chains form an alternating ring which encloses part of the gamma chain. CF(1) is attached to CF(0) by a central stalk formed by the gamma and epsilon chains, while a peripheral stalk is formed by the delta and b chains.

It is found in the cell inner membrane. In terms of biological role, key component of the proton channel; it plays a direct role in the translocation of protons across the membrane. This chain is ATP synthase subunit a, found in Rickettsia prowazekii (strain Madrid E).